A 159-amino-acid chain; its full sequence is Large ribosomal subunit protein uL22 (159 aa).

Belongs to the universal ribosomal protein uL22 family. As to quaternary structure, part of the 50S ribosomal subunit.

Its function is as follows. This protein binds specifically to 23S rRNA. It makes multiple contacts with different domains of the 23S rRNA in the assembled 50S subunit and ribosome. Functionally, the globular domain of the protein is located near the polypeptide exit tunnel on the outside of the subunit, while an extended beta-hairpin is found that lines the wall of the exit tunnel in the center of the 70S ribosome. This is Large ribosomal subunit protein uL22 from Methanopyrus kandleri (strain AV19 / DSM 6324 / JCM 9639 / NBRC 100938).